The primary structure comprises 232 residues: Large ribosomal subunit protein uL1 (232 aa).

It belongs to the universal ribosomal protein uL1 family. As to quaternary structure, part of the 50S ribosomal subunit.

In terms of biological role, binds directly to 23S rRNA. The L1 stalk is quite mobile in the ribosome, and is involved in E site tRNA release. Functionally, protein L1 is also a translational repressor protein, it controls the translation of the L11 operon by binding to its mRNA. The sequence is that of Large ribosomal subunit protein uL1 from Rhizobium meliloti (strain 1021) (Ensifer meliloti).